Here is a 367-residue protein sequence, read N- to C-terminus: Alanine racemase (367 aa).

Lysine 40 serves as the catalytic Proton acceptor; specific for D-alanine. Lysine 40 is modified (N6-(pyridoxal phosphate)lysine). Arginine 136 contacts substrate. Tyrosine 263 functions as the Proton acceptor; specific for L-alanine in the catalytic mechanism. Position 310 (methionine 310) interacts with substrate.

The protein belongs to the alanine racemase family. The cofactor is pyridoxal 5'-phosphate.

It carries out the reaction L-alanine = D-alanine. Its pathway is amino-acid biosynthesis; D-alanine biosynthesis; D-alanine from L-alanine: step 1/1. Functionally, catalyzes the interconversion of L-alanine and D-alanine. May also act on other amino acids. This chain is Alanine racemase (alr), found in Streptococcus thermophilus (strain CNRZ 1066).